The sequence spans 89 residues: uncharacterized protein (89 aa).

2 helical membrane-spanning segments follow: residues 11-31 and 63-83; these read IFGAVILVSMIGALVAEPIAL and AAISAALGPAGLASGVFTVVF.

It is found in the cell membrane. This is an uncharacterized protein from Methanocaldococcus jannaschii (strain ATCC 43067 / DSM 2661 / JAL-1 / JCM 10045 / NBRC 100440) (Methanococcus jannaschii).